A 513-amino-acid chain; its full sequence is Varicidin biosynthesis cluster-specific transcription factor (513 aa).

The zn(2)-C6 fungal-type DNA-binding region spans 16 to 54 (CERCRLHKLKCTILPQKRFEGPQEAPEQCTRCARAKAKC). 2 disordered regions span residues 58–92 (RRAPPKHRASSSNDRSSVSKGINSTTPATRTMQPN) and 97–116 (VSSHRIELPPSPASNQSSLK). Positions 67–76 (SSSNDRSSVS) are enriched in low complexity. Over residues 77 to 92 (KGINSTTPATRTMQPN) the composition is skewed to polar residues.

It localises to the nucleus. Functionally, transcription factor that regulates the expression of the gene cluster that mediates the biosynthesis of varicidin A, an antifungal natural product containing a cis-octahydrodecalin core. In Talaromyces variabilis (Penicillium variabile), this protein is Varicidin biosynthesis cluster-specific transcription factor.